A 550-amino-acid chain; its full sequence is Cytochrome P450 monooxygenase hasH (550 aa).

The helical transmembrane segment at 39-59 threads the bilayer; that stretch reads IGVLASIVVLVTVVIGPKAVI. Residue Cys493 coordinates heme.

Belongs to the cytochrome P450 family. Heme is required as a cofactor.

It is found in the membrane. It participates in secondary metabolite biosynthesis. Cytochrome P450 monooxygenase; part of the gene cluster that mediates the biosynthesis of hexadehydro-astechrome (HAS), a tryptophan-derived iron(III)-complex that acts as a virulence factor in infected mice. Within the pathway, hasH, with the O-methyltransferase hasC and the FAD-linked oxidoreductase hasG, convert the hasE-prenylated Trp-Ala dipeptide into an O-methylated diketopiperazine that is then released from the hasD NRPS. The HAS biosynthesis begins with the synthesis of a tethered Trp-Ala dipeptide by the NRPS hasD. The 7-dimethylallyltryptophan synthase hasE then catalyzes the prenylation of the hasD-tethered tryptophan or the resulting tethered Trp-Ala dipeptide at the C-7 position of the indole moiety. HAS biosynthesis continues via tethered intermediates with the succesive action of the cytochrome P450 monooxygenase hasH, the O-methyltransferase hasC, and the FAD-linked oxidoreductase hasG. The resulting O-methylated diketopiperazine is then released from hasD. Finally, three O-methylated diketopiperazine molecules assemble in a trimeric complex with Fe(III) to produce hexadehydro-astechrome. The chain is Cytochrome P450 monooxygenase hasH from Aspergillus fumigatus (strain CBS 144.89 / FGSC A1163 / CEA10) (Neosartorya fumigata).